Here is a 1001-residue protein sequence, read N- to C-terminus: Sarcoplasmic/endoplasmic reticulum calcium ATPase 1 (1001 aa).

4 helical membrane-spanning segments follow: residues 49-69 (LWELVIEQFEDLLVRILLLAA), 90-110 (EPFVILLILIANAIVGVWQER), 254-273 (DEFGEQLSKVISLICVAVWL), and 296-313 (FKIAVALAVAAIPEGLPA). Positions 304, 305, 307, and 309 each coordinate Ca(2+). D351 serves as the catalytic 4-aspartylphosphate intermediate. D351 and T353 together coordinate Mg(2+). T353 contacts ATP. A Phosphothreonine modification is found at T441. E442, R489, K515, and R560 together coordinate ATP. T569 carries the phosphothreonine modification. S581 is subject to Phosphoserine. ATP is bound by residues T625, G626, D627, R678, and K684. Residue D703 participates in Mg(2+) binding. N706 serves as a coordination point for ATP. 3 helical membrane passes run 758–777 (KQFIRYLISSNVGEVVCIFL), 788–808 (IPVQLLWVNLVTDGLPATALG), and 829–851 (ISGWLFFRYMAIGGYVGAATVGA). N768, E771, N796, T799, and D800 together coordinate Ca(2+). The segment at 788–808 (IPVQLLWVNLVTDGLPATALG) is interaction with PLN. C876 and C888 form a disulfide bridge. 3 helical membrane-spanning segments follow: residues 898–917 (TMALSVLVTIEMCNALNSLS), 931–949 (IWLLGSICLSMSLHFLILY), and 965–985 (TQWLMVLKISLPVIGLDEILK). Ca(2+) is bound at residue E908. The interval 932–943 (WLLGSICLSMSL) is interaction with PLN.

Belongs to the cation transport ATPase (P-type) (TC 3.A.3) family. Type IIA subfamily. As to quaternary structure, interacts with sarcolipin (SLN). Interacts with phospholamban (PLN). Interacts with myoregulin (MRLN). Interacts with DWORF. Interacts with VMP1. It depends on Mg(2+) as a cofactor. Skeletal muscle, fast twitch muscle (type II) fibers.

It localises to the endoplasmic reticulum membrane. Its subcellular location is the sarcoplasmic reticulum membrane. It carries out the reaction Ca(2+)(in) + ATP + H2O = Ca(2+)(out) + ADP + phosphate + H(+). With respect to regulation, inhibited by sarcolipin (SLN) and myoregulin (MRLN). Has also been shown to be reversibly inhibited by phospholamban (PLN) at low calcium concentrations in vitro. Dephosphorylated PLN decreases the apparent affinity of the ATPase for calcium and this inhibition is regulated by the phosphorylation of PLN in vitro. Enhanced by DWORF; DWORF increases activity by displacing sarcolipin (SLN), phospholamban (PLN) and myoregulin (MRLN). Functionally, key regulator of striated muscle performance by acting as the major Ca(2+) ATPase responsible for the reuptake of cytosolic Ca(2+) into the sarcoplasmic reticulum. Catalyzes the hydrolysis of ATP coupled with the translocation of calcium from the cytosol to the sarcoplasmic reticulum lumen. Contributes to calcium sequestration involved in muscular excitation/contraction. This is Sarcoplasmic/endoplasmic reticulum calcium ATPase 1 from Homo sapiens (Human).